We begin with the raw amino-acid sequence, 372 residues long: Ligninase C (372 aa).

The N-terminal stretch at 1–26 (MAFKSLLSFVSVIGALQGANAALTRR) is a signal peptide. The active-site Proton acceptor is His-74. Positions 75, 93, 95, and 97 each coordinate Ca(2+). The N-linked (GlcNAc...) asparagine glycan is linked to Asn-129. A heme b-binding site is contributed by His-205. Residues Thr-206, Asp-223, Thr-225, Leu-228, and Asp-230 each coordinate Ca(2+). Residues 346 to 372 (TPFPTFPTDPGPKTAVAPVPKPPAARK) form a disordered region.

The protein belongs to the peroxidase family. Ligninase subfamily. It depends on Ca(2+) as a cofactor. Heme b is required as a cofactor.

It carries out the reaction 1-(3,4-dimethoxyphenyl)-2-(2-methoxyphenoxy)propane-1,3-diol + H2O2 = 3,4-dimethoxybenzaldehyde + guaiacol + glycolaldehyde + H2O. It catalyses the reaction 2 (3,4-dimethoxyphenyl)methanol + H2O2 = 2 (3,4-dimethoxyphenyl)methanol radical + 2 H2O. It functions in the pathway secondary metabolite metabolism; lignin degradation. Functionally, depolymerization of lignin. Catalyzes the C(alpha)-C(beta) cleavage of the propyl side chains of lignin. The sequence is that of Ligninase C from Trametes versicolor (White-rot fungus).